A 656-amino-acid chain; its full sequence is Kinesin-related protein SMY1 (656 aa).

A Kinesin motor domain is found at 27–364 (HIEVILRAIP…LEFGDSIRQI (338 aa)). 114 to 121 (GPSFSGKS) contributes to the ATP binding site. At Thr-583 the chain carries Phosphothreonine.

This sequence belongs to the TRAFAC class myosin-kinesin ATPase superfamily. Kinesin family.

The protein resides in the cytoplasm. It is found in the cytoskeleton. In terms of biological role, possible microtubule-based motor that can interact or substitute with myosin 2 (MYO2). This is Kinesin-related protein SMY1 (SMY1) from Saccharomyces cerevisiae (strain ATCC 204508 / S288c) (Baker's yeast).